Reading from the N-terminus, the 415-residue chain is MPEIDVGSQIFDVVFHPTFATVYTGLLNGHVKAFAYNEQGKEQAAFSVRPSKRSCRGLSIKHDGTHLYAVGKAKALKYNFISGLIIRCSVIDTATAQISTRPGAHDSTINRVKYLMPWLISTGDDDGVIKLWDPRQQECVREYTQHFDYITDFLWLDDKKQLVATSGDGTLSVMDVRSKKPEPFAQSEDQDDELLSIVAIKGHSKIVVGTQLGILSIFNRSKGWGDCVDRVPGHPLSIDALCNLPPGLPNVDPTSTVLTGSSDGYVRAVQILPTKLLGVVADHGEWPIERIAVGGGWWVGSVGHEDLLRMTDLEGFFLDQSEDKELKGALGVTNENEQSDEDEEMDVLGNDAGHPEVDGSGSSSSGESSEDSEASDGETPQAKQRKRKIEQKPLDVDKPKGRNEIDVENAFFDEL.

5 WD repeats span residues 5 to 44 (DVGS…KEQA), 104 to 142 (AHDS…CVRE), 145 to 184 (QHFD…PEPF), 189 to 228 (DQDD…GDCV), and 233 to 282 (GHPL…VVAD). The interval 328–415 (GALGVTNENE…DVENAFFDEL (88 aa)) is disordered. Acidic residues predominate over residues 337-346 (EQSDEDEEMD). Over residues 358-367 (DGSGSSSSGE) the composition is skewed to low complexity. Residues 390-405 (EQKPLDVDKPKGRNEI) are compositionally biased toward basic and acidic residues.

Belongs to the WD repeat WDR55 family.

The protein localises to the nucleus. The protein resides in the nucleolus. The sequence is that of WD repeat-containing protein JIP5 (JIP5) from Laccaria bicolor (strain S238N-H82 / ATCC MYA-4686) (Bicoloured deceiver).